Here is an 88-residue protein sequence, read N- to C-terminus: Putative membrane protein insertion efficiency factor (88 aa).

A disordered region spans residues 64–88 (GVDPVPKKSSSKKTSSTTACGCGHS).

The protein belongs to the UPF0161 family.

Its subcellular location is the cell inner membrane. Could be involved in insertion of integral membrane proteins into the membrane. This is Putative membrane protein insertion efficiency factor from Herminiimonas arsenicoxydans.